A 388-amino-acid chain; its full sequence is Probable peptidoglycan glycosyltransferase FtsW (388 aa).

The Cytoplasmic portion of the chain corresponds to 1-19 (MMSPSTSAPHNQPIQPELD). Residues 20-40 (VLLVSTVLLLLGLGLVMVYSA) traverse the membrane as a helical segment. Residues 41–55 (SIAIAEAKFGEGSSY) are Periplasmic-facing. Residues 56–76 (YFLARQASYILAGIAVGIGCF) traverse the membrane as a helical segment. At 77–89 (RIPLRWWQAYSHY) the chain is on the cytoplasmic side. A helical transmembrane segment spans residues 90 to 110 (LLGLGILLLLVVLIPGISHEI). At 111–116 (NGSRRW) the chain is on the periplasmic side. Residues 117–137 (IPLGITSFQPSELMKLIILIF) form a helical membrane-spanning segment. Over 138-151 (TADYVVRKAAFKDH) the chain is Cytoplasmic. A helical membrane pass occupies residues 152 to 172 (FFKGFLPILALLTIVSLLLLM). Over 173-175 (EPD) the chain is Periplasmic. Helical transmembrane passes span 176–196 (LGAT…NGMS) and 197–217 (LKMF…LIII). Topologically, residues 218 to 284 (EPYRMDRINA…DFMFAVLAEE (67 aa)) are periplasmic. A helical transmembrane segment spans residues 285 to 305 (LGFAGVVTVISLFFFLLVRIF). Over 306 to 324 (KVGRTAARLGDQFGSLVAQ) the chain is Cytoplasmic. A helical membrane pass occupies residues 325 to 345 (GIGVWLGLQAFINMGVNMGLL). Residues 346–351 (PTKGLT) are Periplasmic-facing. The chain crosses the membrane as a helical span at residues 352 to 372 (LPFMSYGGSSIVINSIAIAIL). The Cytoplasmic segment spans residues 373–388 (LRIDWENRLKRRGLNA).

Belongs to the SEDS family. FtsW subfamily.

It is found in the cell inner membrane. The catalysed reaction is [GlcNAc-(1-&gt;4)-Mur2Ac(oyl-L-Ala-gamma-D-Glu-L-Lys-D-Ala-D-Ala)](n)-di-trans,octa-cis-undecaprenyl diphosphate + beta-D-GlcNAc-(1-&gt;4)-Mur2Ac(oyl-L-Ala-gamma-D-Glu-L-Lys-D-Ala-D-Ala)-di-trans,octa-cis-undecaprenyl diphosphate = [GlcNAc-(1-&gt;4)-Mur2Ac(oyl-L-Ala-gamma-D-Glu-L-Lys-D-Ala-D-Ala)](n+1)-di-trans,octa-cis-undecaprenyl diphosphate + di-trans,octa-cis-undecaprenyl diphosphate + H(+). It functions in the pathway cell wall biogenesis; peptidoglycan biosynthesis. Functionally, peptidoglycan polymerase that is essential for cell division. This chain is Probable peptidoglycan glycosyltransferase FtsW, found in Nitrosomonas europaea (strain ATCC 19718 / CIP 103999 / KCTC 2705 / NBRC 14298).